Reading from the N-terminus, the 232-residue chain is Imidazoleglycerol-phosphate dehydratase (232 aa).

The protein belongs to the imidazoleglycerol-phosphate dehydratase family.

The enzyme catalyses D-erythro-1-(imidazol-4-yl)glycerol 3-phosphate = 3-(imidazol-4-yl)-2-oxopropyl phosphate + H2O. The protein operates within amino-acid biosynthesis; L-histidine biosynthesis; L-histidine from 5-phospho-alpha-D-ribose 1-diphosphate: step 6/9. The polypeptide is Imidazoleglycerol-phosphate dehydratase (HIS3) (Lachancea kluyveri (strain ATCC 58438 / CBS 3082 / BCRC 21498 / NBRC 1685 / JCM 7257 / NCYC 543 / NRRL Y-12651) (Yeast)).